The following is a 490-amino-acid chain: Aspartyl/glutamyl-tRNA(Asn/Gln) amidotransferase subunit B (490 aa).

It belongs to the GatB/GatE family. GatB subfamily. Heterotrimer of A, B and C subunits.

It catalyses the reaction L-glutamyl-tRNA(Gln) + L-glutamine + ATP + H2O = L-glutaminyl-tRNA(Gln) + L-glutamate + ADP + phosphate + H(+). The catalysed reaction is L-aspartyl-tRNA(Asn) + L-glutamine + ATP + H2O = L-asparaginyl-tRNA(Asn) + L-glutamate + ADP + phosphate + 2 H(+). Functionally, allows the formation of correctly charged Asn-tRNA(Asn) or Gln-tRNA(Gln) through the transamidation of misacylated Asp-tRNA(Asn) or Glu-tRNA(Gln) in organisms which lack either or both of asparaginyl-tRNA or glutaminyl-tRNA synthetases. The reaction takes place in the presence of glutamine and ATP through an activated phospho-Asp-tRNA(Asn) or phospho-Glu-tRNA(Gln). The sequence is that of Aspartyl/glutamyl-tRNA(Asn/Gln) amidotransferase subunit B from Symbiobacterium thermophilum (strain DSM 24528 / JCM 14929 / IAM 14863 / T).